Consider the following 144-residue polypeptide: Large ribosomal subunit protein uL16 (144 aa).

Residues 1 to 16 (MLIPKRVKYRKQHRPR) are compositionally biased toward basic residues. A disordered region spans residues 1-25 (MLIPKRVKYRKQHRPRGNGGVSKGG).

It belongs to the universal ribosomal protein uL16 family. Part of the 50S ribosomal subunit.

In terms of biological role, binds 23S rRNA and is also seen to make contacts with the A and possibly P site tRNAs. The protein is Large ribosomal subunit protein uL16 of Desulforamulus reducens (strain ATCC BAA-1160 / DSM 100696 / MI-1) (Desulfotomaculum reducens).